The primary structure comprises 424 residues: Tyrosine--tRNA ligase (424 aa).

Tyrosine 37 lines the L-tyrosine pocket. The 'HIGH' region signature appears at 42–51 (PTADSLHLGH). L-tyrosine is bound by residues tyrosine 175 and glutamine 179. Residues 235–239 (KFGKT) carry the 'KMSKS' region motif. Lysine 238 lines the ATP pocket. Positions 357 to 414 (AELQKALVSAQLAPSRSQARTLIQSSSISVNGKKQLKPEYIFTSEDRLLDRYTLLRRG) constitute an S4 RNA-binding domain.

This sequence belongs to the class-I aminoacyl-tRNA synthetase family. TyrS type 1 subfamily. In terms of assembly, homodimer.

Its subcellular location is the cytoplasm. The catalysed reaction is tRNA(Tyr) + L-tyrosine + ATP = L-tyrosyl-tRNA(Tyr) + AMP + diphosphate + H(+). Its function is as follows. Catalyzes the attachment of tyrosine to tRNA(Tyr) in a two-step reaction: tyrosine is first activated by ATP to form Tyr-AMP and then transferred to the acceptor end of tRNA(Tyr). The polypeptide is Tyrosine--tRNA ligase (Hamiltonella defensa subsp. Acyrthosiphon pisum (strain 5AT)).